The chain runs to 557 residues: Protein NRT1/ PTR FAMILY 5.14 (557 aa).

The next 2 membrane-spanning stretches (helical) occupy residues 35 to 55 and 78 to 98; these read AALF…GIGS and AWSG…DAFL. T103 is modified (phosphothreonine). Transmembrane regions (helical) follow at residues 104 to 124, 133 to 153, 183 to 203, 209 to 229, 320 to 340, 357 to 377, 401 to 421, 443 to 463, 479 to 499, and 526 to 546; these read IIIS…SAFL, SSTS…VAIG, FFNW…LVVV, FSWA…LVLF, IPVW…MTFF, IPPA…VPIY, IGTG…VEFK, IWWL…TLVG, IGLA…SLLI, and YFYW…LFIS.

It belongs to the major facilitator superfamily. Proton-dependent oligopeptide transporter (POT/PTR) (TC 2.A.17) family. In terms of tissue distribution, expressed in roots.

Its subcellular location is the membrane. The polypeptide is Protein NRT1/ PTR FAMILY 5.14 (NPF5.14) (Arabidopsis thaliana (Mouse-ear cress)).